The following is a 386-amino-acid chain: Enamidase (386 aa).

3 residues coordinate Zn(2+): histidine 67, histidine 69, and glutamate 164. Residues glutamate 164, histidine 193, and histidine 220 each coordinate Fe cation. Aspartate 276 serves as a coordination point for Zn(2+).

As to quaternary structure, homotetramer. Dimer of dimers. Fe cation is required as a cofactor. Zn(2+) serves as cofactor.

It catalyses the reaction 1,4,5,6-tetrahydro-6-oxonicotinate + 2 H2O = 2-formylglutarate + NH4(+). The protein operates within cofactor degradation; nicotinate degradation; propanoate and pyruvate from 6-hydroxynicotinate: step 2/8. In terms of biological role, decyclization of 6-oxo-1,4,5,6-tetrahydronicotinate to form 2-(enamine)glutarate, followed by hydrolysis to form (S)-2-formylglutarate. This Eubacterium barkeri (Clostridium barkeri) protein is Enamidase.